The chain runs to 304 residues: 33 kDa chaperonin (304 aa).

Intrachain disulfides connect cysteine 236–cysteine 238 and cysteine 269–cysteine 272.

Belongs to the HSP33 family. Under oxidizing conditions two disulfide bonds are formed involving the reactive cysteines. Under reducing conditions zinc is bound to the reactive cysteines and the protein is inactive.

Its subcellular location is the cytoplasm. Redox regulated molecular chaperone. Protects both thermally unfolding and oxidatively damaged proteins from irreversible aggregation. Plays an important role in the bacterial defense system toward oxidative stress. This Pelobacter propionicus (strain DSM 2379 / NBRC 103807 / OttBd1) protein is 33 kDa chaperonin.